We begin with the raw amino-acid sequence, 124 residues long: Small ribosomal subunit protein bS6 (124 aa).

The protein belongs to the bacterial ribosomal protein bS6 family.

Its function is as follows. Binds together with bS18 to 16S ribosomal RNA. The polypeptide is Small ribosomal subunit protein bS6 (Bordetella avium (strain 197N)).